The following is a 525-amino-acid chain: C6 finger transcription factor fsqA (525 aa).

A DNA-binding region (zn(2)-C6 fungal-type) is located at residues 12 to 53 (CDRCRGQKLRCVGAGKPIPNSSSRLLRNEIPCDRCRRAKVEC). 3 disordered regions span residues 80 to 142 (RSSS…LGDM), 204 to 260 (EWNS…EPAG), and 327 to 371 (RARS…ARSS). Positions 95–115 (PPNSLVTAASKPHPNSLSFNH) are enriched in polar residues. Positions 327–337 (RARSQWSSLPE) are enriched in polar residues.

It localises to the nucleus. Transcription factor that regulates the expression of the gene cluster that mediates the biosynthesis of the isoquinoline alkaloids fumisoquin A, fumisoquin B and fumisoquin C; as well as small amounts of fumipyrrole as a shunt metabolite. The products of the cluster lead to a brown coloration and are important for growth and conidiation. The polypeptide is C6 finger transcription factor fsqA (Aspergillus fumigatus (strain ATCC MYA-4609 / CBS 101355 / FGSC A1100 / Af293) (Neosartorya fumigata)).